The chain runs to 493 residues: Transcript termination protein OPG145 (493 aa).

Positions 100–256 (MIESKRPLYI…NSIINIAKLS (157 aa)) constitute a Helicase ATP-binding domain. Residue 113-120 (LACGFGKT) participates in ATP binding. Residues 206 to 209 (DESH) carry the DESH box motif. Residues 309–456 (ILDTLVEEFK…IISLSVDKLG (148 aa)) enclose the Helicase C-terminal domain.

The protein belongs to the helicase family. Poxviruses subfamily. In terms of assembly, interacts with OPG087. Might be part of a transcription complex composed at least of OPG087, OPG110, and OPG145.

The protein resides in the virion. Functionally, DNA helicase which seems to act as a postreplicative transcription termination factor. Involved in ATP-dependent release of nascent RNA. Forms a stable complex with single-stranded DNA, and to a lesser extent RNA. The chain is Transcript termination protein OPG145 (OPG145) from Homo sapiens (Human).